The following is a 407-amino-acid chain: MNKWTDVKKVVLAYSGGLDTSIILKWLQSELGAEVVTFTADLGQGEELESARRKAEIMGIKEIYIEDLREEFVRDFVFPMFRANAVYEGVYLLGTSIARPLISKRLIEIAKETGADAIAHGATGKGNDQVRFELSAYALDPDIKIIAPWRDWTFKSRTDLIEFARVHQIPVEKDKEGEAPFSVDANLLHSSSEGKILENPAIPAPEYVHMRTLSPETAPDKATIITIGFKKGDAVSINGEMLSPATLLAQLNNYGRDNGIGRLDLVENRFVGMKSRGIYETPGGTILLTAHRAIESLTLDRGAAHLKDELMPRYAELIYYGFWFSPERKMLQAAIDLSQEHVEGEVTLKLYKGNVIVEGRQSKKSLYFDKLVTFEDDQGAYDQKDAAGFIKLNALRLRTLAARSSVL.

Residues 13–21 (AYSGGLDTS) and alanine 40 contribute to the ATP site. L-citrulline contacts are provided by tyrosine 91 and serine 96. Glycine 121 is an ATP binding site. Threonine 123, asparagine 127, and aspartate 128 together coordinate L-aspartate. Asparagine 127 is an L-citrulline binding site. Residues arginine 131, serine 182, serine 191, glutamate 267, and tyrosine 279 each contribute to the L-citrulline site.

This sequence belongs to the argininosuccinate synthase family. Type 1 subfamily. As to quaternary structure, homotetramer.

The protein resides in the cytoplasm. The enzyme catalyses L-citrulline + L-aspartate + ATP = 2-(N(omega)-L-arginino)succinate + AMP + diphosphate + H(+). It functions in the pathway amino-acid biosynthesis; L-arginine biosynthesis; L-arginine from L-ornithine and carbamoyl phosphate: step 2/3. The polypeptide is Argininosuccinate synthase (Bartonella bacilliformis (strain ATCC 35685 / KC583 / Herrer 020/F12,63)).